The primary structure comprises 453 residues: V-type proton ATPase subunit B (453 aa).

ATP is bound at residue arginine 341.

This sequence belongs to the ATPase alpha/beta chains family. V-ATPase is a heteromultimeric enzyme made up of two complexes: the ATP-hydrolytic V1 complex and the proton translocation V0 complex. The V1 complex consists of three catalytic AB heterodimers that form a heterohexamer, three peripheral stalks each consisting of EG heterodimers, one central rotor including subunits D and F, and the regulatory subunits C and H. The proton translocation complex V0 consists of the proton transport subunit a, a ring of proteolipid subunits c9c'', rotary subunit d, subunits e and f, and two accessory subunits.

In terms of biological role, non-catalytic subunit of the V1 complex of vacuolar(H+)-ATPase (V-ATPase), a multisubunit enzyme composed of a peripheral complex (V1) that hydrolyzes ATP and a membrane integral complex (V0) that translocates protons. V-ATPase is responsible for acidifying and maintaining the pH of intracellular compartments and in some cell types, is targeted to the plasma membrane, where it is responsible for acidifying the extracellular environment. Essential for the proper assembly and activity of V-ATPase. The sequence is that of V-type proton ATPase subunit B (ATP6V1B) from Gallus gallus (Chicken).